A 327-amino-acid polypeptide reads, in one-letter code: Methionyl-tRNA formyltransferase (327 aa).

A (6S)-5,6,7,8-tetrahydrofolate-binding site is contributed by 121 to 124 (SLLP).

The protein belongs to the Fmt family.

It carries out the reaction L-methionyl-tRNA(fMet) + (6R)-10-formyltetrahydrofolate = N-formyl-L-methionyl-tRNA(fMet) + (6S)-5,6,7,8-tetrahydrofolate + H(+). In terms of biological role, attaches a formyl group to the free amino group of methionyl-tRNA(fMet). The formyl group appears to play a dual role in the initiator identity of N-formylmethionyl-tRNA by promoting its recognition by IF2 and preventing the misappropriation of this tRNA by the elongation apparatus. The chain is Methionyl-tRNA formyltransferase from Burkholderia pseudomallei (strain K96243).